We begin with the raw amino-acid sequence, 82 residues long: Sec-independent protein translocase protein TatA (82 aa).

A helical membrane pass occupies residues 1–21 (MGGISIWQLLIIAVIIVLLFG). The interval 46–82 (DEPAKDAKKDADFVPQNLEKKEAETVEKQKQNDKEQA) is disordered.

The protein belongs to the TatA/E family. As to quaternary structure, the Tat system comprises two distinct complexes: a TatABC complex, containing multiple copies of TatA, TatB and TatC subunits, and a separate TatA complex, containing only TatA subunits. Substrates initially bind to the TatABC complex, which probably triggers association of the separate TatA complex to form the active translocon.

It localises to the cell inner membrane. Its function is as follows. Part of the twin-arginine translocation (Tat) system that transports large folded proteins containing a characteristic twin-arginine motif in their signal peptide across membranes. TatA could form the protein-conducting channel of the Tat system. The protein is Sec-independent protein translocase protein TatA of Aliivibrio fischeri (strain MJ11) (Vibrio fischeri).